The chain runs to 518 residues: MARAKRVKRDSVTHIYQTCKQAGTCPPDVLNKVEQTTVADNILKYGSGGVFFGGLGIGTGRGTGGVTGYRPLPEGPGIRVGGTPTVVRPSLVPESVGPADILPIDTIDPVEPTASSVVPLTESSATDLLPGEVETIAEINPVSEGPTIDSPVVTTSRGSSAILEVAPDPIPPTRVRVARTQYHNPAFQIITESTPAQGETSLADHILVTSGSGGQTIGSDITDIIELQEIPSRYSFEIEEPTPPRQSSTPLQRTQTTGRRRGVSLTNRRLVQQVQVDNPLFIDKPSKLVRFSFDNPVFEEDITNIFEQDLETFEEPPDRDFLDIKKLSRPQYSTTPAGYVRVSRLGTRGTIRTRSGAQIGSQVHFYRDLSSIDSEDPIELQLLGQHSGDATIVQGTVESTFVDMDIAEDPLSESIEAHSDDLLLDEAVEDFSGSQLVIGNRRSTTSYTVPRFETTRSSSYYVQDTQGYYVAYPEHRNTAEIIYPTPDIPVVVIHTHDNSGDFYLHPSLRRRKRKRKYL.

The short motif at 1-10 (MARAKRVKRD) is the Nuclear localization signal element. A disulfide bridge connects residues C19 and C25. Residues 238–262 (IEEPTPPRQSSTPLQRTQTTGRRRG) are disordered. The short motif at 510–517 (RRKRKRKY) is the Nuclear localization signal element.

It belongs to the papillomaviridae L2 protein family. Interacts with major capsid protein L1. Interacts with E2; this interaction inhibits E2 transcriptional activity but not the DNA replication function E2. Interacts with host GADD45GIP1. Interacts with host HSPA8; this interaction is required for L2 nuclear translocation. Interacts with host importins KPNB2 and KPNB3. Forms a complex with importin alpha2-beta1 heterodimers via interaction with the importin alpha2 adapter. Interacts with host DYNLT1; this interaction is essential for virus intracellular transport during entry. Interacts (via C-terminus) with host retromer subunits VPS35 and VPS29. Highly phosphorylated.

The protein localises to the virion. The protein resides in the host nucleus. It localises to the host early endosome. It is found in the host Golgi apparatus. Minor protein of the capsid that localizes along the inner surface of the virion, within the central cavities beneath the L1 pentamers. Plays a role in capsid stabilization through interaction with the major capsid protein L1. Once the virion enters the host cell, L2 escorts the genomic DNA into the nucleus by promoting escape from the endosomal compartments and traffic through the host Golgi network. Mechanistically, the C-terminus of L2 possesses a cell-penetrating peptide that protudes from the host endosome, interacts with host cytoplasmic retromer cargo and thereby mediates the capsid delivery to the host trans-Golgi network. Plays a role through its interaction with host dynein in the intracellular microtubule-dependent transport of viral capsid toward the nucleus. Mediates the viral genome import into the nucleus through binding to host importins. Once within the nucleus, L2 localizes viral genomes to host PML bodies in order to activate early gene expression for establishment of infection. Later on, promotes late gene expression by interacting with the viral E2 protein and by inhibiting its transcriptional activation functions. During virion assembly, encapsidates the genome by direct interaction with the viral DNA. The chain is Minor capsid protein L2 from Homo sapiens (Human).